The sequence spans 320 residues: tRNA uridine(34) hydroxylase (320 aa).

One can recognise a Rhodanese domain in the interval 125–221 (KEKRPLLLDV…YGLKQGSEHW (97 aa)). The Cysteine persulfide intermediate role is filled by Cys181.

The protein belongs to the TrhO family.

The catalysed reaction is uridine(34) in tRNA + AH2 + O2 = 5-hydroxyuridine(34) in tRNA + A + H2O. Its function is as follows. Catalyzes oxygen-dependent 5-hydroxyuridine (ho5U) modification at position 34 in tRNAs. This chain is tRNA uridine(34) hydroxylase, found in Protochlamydia amoebophila (strain UWE25).